The primary structure comprises 337 residues: Glyceraldehyde-3-phosphate dehydrogenase (337 aa).

NAD(+) is bound by residues 17 to 18, D39, K83, and S125; that span reads RI. Residues 156–158, T187, R202, 215–216, and R238 contribute to the D-glyceraldehyde 3-phosphate site; these read SCT and TG. The active-site Nucleophile is C157. N319 contacts NAD(+).

This sequence belongs to the glyceraldehyde-3-phosphate dehydrogenase family. In terms of assembly, homotetramer.

Its subcellular location is the cytoplasm. It carries out the reaction D-glyceraldehyde 3-phosphate + phosphate + NAD(+) = (2R)-3-phospho-glyceroyl phosphate + NADH + H(+). Its pathway is carbohydrate degradation; glycolysis; pyruvate from D-glyceraldehyde 3-phosphate: step 1/5. Its function is as follows. Catalyzes the oxidative phosphorylation of glyceraldehyde 3-phosphate (G3P) to 1,3-bisphosphoglycerate (BPG) using the cofactor NAD. The first reaction step involves the formation of a hemiacetal intermediate between G3P and a cysteine residue, and this hemiacetal intermediate is then oxidized to a thioester, with concomitant reduction of NAD to NADH. The reduced NADH is then exchanged with the second NAD, and the thioester is attacked by a nucleophilic inorganic phosphate to produce BPG. The polypeptide is Glyceraldehyde-3-phosphate dehydrogenase (gapA) (Mycoplasma pneumoniae (strain ATCC 29342 / M129 / Subtype 1) (Mycoplasmoides pneumoniae)).